Consider the following 77-residue polypeptide: Large ribosomal subunit protein eL14 (77 aa).

This sequence belongs to the eukaryotic ribosomal protein eL14 family.

This is Large ribosomal subunit protein eL14 from Methanococcus vannielii (strain ATCC 35089 / DSM 1224 / JCM 13029 / OCM 148 / SB).